Here is a 393-residue protein sequence, read N- to C-terminus: Ribonuclease D (393 aa).

Residues 14-181 form the 3'-5' exonuclease domain; that stretch reads LITTTEDLTG…VYQLLLERLE (168 aa). Positions 219–300 constitute an HRDC domain; sequence NRRMLGVLRA…AAARALPDGA (82 aa).

This sequence belongs to the RNase D family. The cofactor is a divalent metal cation.

Its subcellular location is the cytoplasm. The enzyme catalyses Exonucleolytic cleavage that removes extra residues from the 3'-terminus of tRNA to produce 5'-mononucleotides.. Its function is as follows. Exonuclease involved in the 3' processing of various precursor tRNAs. Initiates hydrolysis at the 3'-terminus of an RNA molecule and releases 5'-mononucleotides. The chain is Ribonuclease D from Gluconacetobacter diazotrophicus (strain ATCC 49037 / DSM 5601 / CCUG 37298 / CIP 103539 / LMG 7603 / PAl5).